Consider the following 274-residue polypeptide: MGTLSVNQNKLQKRLRRLAGEAVADFNMIEEGDKVMVCLSGGKDSYTMLDVLMHLQKVAPIKFDIVAVNMDQKQPGFPEHVLPAYLKELGIEYHIVEKDTYSVVKELIPEGKTTCSLCSRLRRGTLYTFADEIGATKMALGHHRDDIVETFFLNMFFNGSLKAMPPKLRADDGRNVVIRPLAYCHEKDIQAYSDLKQFPIIPCNLCGSQENLQRQVVKEMLQDWERKTPGRTESIFRALQNVQPSQLADRNLFDFTNLRIDETAASRFVNVVNI.

The short motif at 40–45 (SGGKDS) is the PP-loop motif element. [4Fe-4S] cluster is bound by residues Cys115, Cys118, and Cys206.

It belongs to the TtcA family. In terms of assembly, homodimer. The cofactor is Mg(2+). [4Fe-4S] cluster is required as a cofactor.

It is found in the cytoplasm. It catalyses the reaction cytidine(32) in tRNA + S-sulfanyl-L-cysteinyl-[cysteine desulfurase] + AH2 + ATP = 2-thiocytidine(32) in tRNA + L-cysteinyl-[cysteine desulfurase] + A + AMP + diphosphate + H(+). It functions in the pathway tRNA modification. Catalyzes the ATP-dependent 2-thiolation of cytidine in position 32 of tRNA, to form 2-thiocytidine (s(2)C32). The sulfur atoms are provided by the cysteine/cysteine desulfurase (IscS) system. The protein is tRNA-cytidine(32) 2-sulfurtransferase of Pseudomonas syringae pv. syringae (strain B728a).